The primary structure comprises 370 residues: Queuine tRNA-ribosyltransferase (370 aa).

Asp92 acts as the Proton acceptor in catalysis. Residues 92 to 96 (DSGGF), Asp146, Gln190, and Gly217 contribute to the substrate site. Residues 248 to 254 (GVGTPEN) are RNA binding. The Nucleophile role is filled by Asp267. Residues Cys305, Cys307, Cys310, and His336 each coordinate Zn(2+).

This sequence belongs to the queuine tRNA-ribosyltransferase family. As to quaternary structure, homodimer. Within each dimer, one monomer is responsible for RNA recognition and catalysis, while the other monomer binds to the replacement base PreQ1. It depends on Zn(2+) as a cofactor.

It catalyses the reaction 7-aminomethyl-7-carbaguanine + guanosine(34) in tRNA = 7-aminomethyl-7-carbaguanosine(34) in tRNA + guanine. The protein operates within tRNA modification; tRNA-queuosine biosynthesis. Functionally, catalyzes the base-exchange of a guanine (G) residue with the queuine precursor 7-aminomethyl-7-deazaguanine (PreQ1) at position 34 (anticodon wobble position) in tRNAs with GU(N) anticodons (tRNA-Asp, -Asn, -His and -Tyr). Catalysis occurs through a double-displacement mechanism. The nucleophile active site attacks the C1' of nucleotide 34 to detach the guanine base from the RNA, forming a covalent enzyme-RNA intermediate. The proton acceptor active site deprotonates the incoming PreQ1, allowing a nucleophilic attack on the C1' of the ribose to form the product. After dissociation, two additional enzymatic reactions on the tRNA convert PreQ1 to queuine (Q), resulting in the hypermodified nucleoside queuosine (7-(((4,5-cis-dihydroxy-2-cyclopenten-1-yl)amino)methyl)-7-deazaguanosine). In Desulforapulum autotrophicum (strain ATCC 43914 / DSM 3382 / VKM B-1955 / HRM2) (Desulfobacterium autotrophicum), this protein is Queuine tRNA-ribosyltransferase.